The primary structure comprises 371 residues: Protein MxiG (371 aa).

Residues 127-141 traverse the membrane as a helical segment; sequence VFFFFAVIVVLIIIF.

The protein resides in the cell inner membrane. The protein localises to the cell outer membrane. Involved in the secretion of the Ipa antigens. Involved in the intracellular dissemination of Shigella. Part of the Mxi-Spa secretion apparatus. In Shigella flexneri, this protein is Protein MxiG (mxiG).